The primary structure comprises 438 residues: Coenzyme A disulfide reductase (438 aa).

Residue 8–33 participates in FAD binding; the sequence is GAVAGGATCASQIRRLDKESDIIIFE. The substrate site is built by Thr-15, Gln-19, Arg-22, Ser-39, and Asn-42. Cys-43 (nucleophile) is an active-site residue. The active-site Redox-active is the Cys-43. Lys-71 contributes to the substrate binding site. 151–166 contacts NADP(+); it reads VLVVGAGYVSLEVLEN. 267–277 is a binding site for FAD; it reads TNVPNIYAIGD. His-299 contacts substrate. Tyr-419 contributes to the FAD binding site. Position 427 (Lys-427) interacts with substrate.

It belongs to the class-III pyridine nucleotide-disulfide oxidoreductase family. As to quaternary structure, homodimer. Requires FAD as cofactor.

It catalyses the reaction NADP(+) + 2 CoA = CoA-disulfide + NADPH + H(+). Its function is as follows. Catalyzes specifically the NADPH-dependent reduction of coenzyme A disulfide. The chain is Coenzyme A disulfide reductase from Staphylococcus aureus (strain COL).